The chain runs to 440 residues: 3-phosphoshikimate 1-carboxyvinyltransferase (440 aa).

3-phosphoshikimate is bound by residues Lys26, Ser27, and Arg31. A phosphoenolpyruvate-binding site is contributed by Lys26. The phosphoenolpyruvate site is built by Gly99 and Arg127. Ser172, Gln174, Asp320, and Lys347 together coordinate 3-phosphoshikimate. Gln174 provides a ligand contact to phosphoenolpyruvate. Asp320 serves as the catalytic Proton acceptor. Phosphoenolpyruvate contacts are provided by Arg351 and Arg392.

This sequence belongs to the EPSP synthase family. In terms of assembly, monomer.

Its subcellular location is the cytoplasm. The enzyme catalyses 3-phosphoshikimate + phosphoenolpyruvate = 5-O-(1-carboxyvinyl)-3-phosphoshikimate + phosphate. It participates in metabolic intermediate biosynthesis; chorismate biosynthesis; chorismate from D-erythrose 4-phosphate and phosphoenolpyruvate: step 6/7. Its function is as follows. Catalyzes the transfer of the enolpyruvyl moiety of phosphoenolpyruvate (PEP) to the 5-hydroxyl of shikimate-3-phosphate (S3P) to produce enolpyruvyl shikimate-3-phosphate and inorganic phosphate. The protein is 3-phosphoshikimate 1-carboxyvinyltransferase of Xanthomonas oryzae pv. oryzae (strain MAFF 311018).